The primary structure comprises 255 residues: Polycomb group RING finger protein 5 (255 aa).

Residues 18–57 (CYICKGYLIKPTTVTECLHTFCKTCIVQHFEDSNDCPRCG) form an RING-type zinc finger. Residues 97-132 (WKKNKPQENGQDDMSKVDKPKVDEEGDENQDDKDYH) are disordered. Residues 109–119 (DMSKVDKPKVD) are compositionally biased toward basic and acidic residues.

Component of a PRC1-like complex that contains PCGF5, RNF2 and UBE2D3. Interacts with RNF2; the interaction is direct. Interacts with CBX6, CBX7 and CBX8. Interacts with AUTS2; the interaction is direct. Identified in a complex that contains AUTS2, PCGF5, CSNK2B and RNF2.

The protein resides in the nucleus. It localises to the nucleoplasm. Component of a Polycomb group (PcG) multiprotein PRC1-like complex, a complex class required to maintain the transcriptionally repressive state of many genes, including Hox genes, throughout development. PcG PRC1 complex acts via chromatin remodeling and modification of histones; it mediates monoubiquitination of histone H2A 'Lys-119', rendering chromatin heritably changed in its expressibility. Within the PRC1-like complex, regulates RNF2 ubiquitin ligase activity. Plays a redundant role with PCGF3 as part of a PRC1-like complex that mediates monoubiquitination of histone H2A 'Lys-119' on the X chromosome and is required for normal silencing of one copy of the X chromosome in XX females. The polypeptide is Polycomb group RING finger protein 5 (PCGF5) (Bos taurus (Bovine)).